Reading from the N-terminus, the 94-residue chain is MLKPLGDRVVIELVQAEEKTASGIVLPDTAKEKPQEGKVIAVGTGRVLENGERVALEVAAGDRIIFSKYAGTEVKYEGTDYLILRESDILAVIG.

This sequence belongs to the GroES chaperonin family. As to quaternary structure, heptamer of 7 subunits arranged in a ring. Interacts with the chaperonin GroEL.

The protein localises to the cytoplasm. Functionally, together with the chaperonin GroEL, plays an essential role in assisting protein folding. The GroEL-GroES system forms a nano-cage that allows encapsulation of the non-native substrate proteins and provides a physical environment optimized to promote and accelerate protein folding. GroES binds to the apical surface of the GroEL ring, thereby capping the opening of the GroEL channel. In Bacillus cytotoxicus (strain DSM 22905 / CIP 110041 / 391-98 / NVH 391-98), this protein is Co-chaperonin GroES.